The chain runs to 387 residues: MTVSELNEQAKALLETHFSFVEVTGEISRLIRHSSGHWYFSLKDEKSVISSAMYKFSNQQVKFEVKDGMQVTIYGKLTIYPPSGSYQLLANKMLPVGIGELELAFNQLKSKLENEGLFDIKFKKPLPKFPKKIAIVTSLTSAAYQDMLKVINSRYKLCEFIAFNTLVQGEMAAANIIQMLQKADKMGFDAIVLARGGGSKEDLWCFNDENLARVIFTLKTPIVSAVGHEIDYCISDFVSDHRSLTPTAAMVDLLPDANTILQSLDIAFDKFESFIDGKFQNSFNILNLINQSLKNQAISQKIEKANLTLENKKANLENLITSKINNLAHKIKEFELVFDRQEQFFKATKNMVQIEKNGKIMPLHELQIGDEISIYSQITKKNAIIKS.

This sequence belongs to the XseA family. Heterooligomer composed of large and small subunits.

The protein localises to the cytoplasm. The enzyme catalyses Exonucleolytic cleavage in either 5'- to 3'- or 3'- to 5'-direction to yield nucleoside 5'-phosphates.. Bidirectionally degrades single-stranded DNA into large acid-insoluble oligonucleotides, which are then degraded further into small acid-soluble oligonucleotides. In Campylobacter fetus subsp. fetus (strain 82-40), this protein is Exodeoxyribonuclease 7 large subunit.